The sequence spans 227 residues: Protein p26 (227 aa).

Self-associates.

The protein localises to the host cell junction. The protein resides in the host plasmodesma. The polypeptide is Protein p26 (Lettuce infectious yellows virus (isolate United States/92) (LIYV)).